Here is a 270-residue protein sequence, read N- to C-terminus: MQYPHPGPAAGAVGVPLYAPTPLLQPAHPTPFYIEDILGRGPAAPTPAPTLPSPNSSFTSLVSPYRTPVYEPTPIHPAFSHHSAAALAAAYGPGGFGGPLYPFPRTVNDYTHALLRHDPLGKPLLWSPFLQRPLHKRKGGQVRFSNDQTIELEKKFETQKYLSPPERKRLAKMLQLSERQVKTWFQNRRAKWRRLKQENPQSNKKEELESLDSSCDQRQDLPSEQNKGASLDSSQCSPSPASQEDLESEISEDSDQEVDIEGDKSYFNAG.

An interaction with SOX13 region spans residues M1–R137. A Phosphoserine modification is found at S53. A DNA-binding region (homeobox) is located at residues R137–K196. Residues R137–G270 are required for WNT signaling induction. The tract at residues R194–G270 is disordered. Positions P222 to A241 are enriched in polar residues. Residues E244–I260 show a composition bias toward acidic residues.

As to quaternary structure, interacts with CD81; the interaction prevents nuclear translocation of HHEX. Interacts (via N-terminus) with SOX13; abolishes the SOX13-mediated inhibition of WNT-mediated transcriptional activity via competitive inhibition of the SOX13-TCF7 complex. Interacts with EIF4E; the interaction inhibits EIF4E-mediated mRNA nuclear export. As to expression, liver and promyelocytic leukemia cell line HL-60.

Its subcellular location is the nucleus. It is found in the nuclear body. It localises to the cytoplasm. In terms of biological role, recognizes the DNA sequence 5'-ATTAA-3'. Transcriptional repressor. Activator of WNT-mediated transcription in conjunction with CTNNB1. Establishes anterior identity at two levels; acts early to enhance canonical WNT-signaling by repressing expression of TLE4, and acts later to inhibit NODAL-signaling by directly targeting NODAL. Inhibits EIF4E-mediated mRNA nuclear export. May play a role in hematopoietic differentiation. This Homo sapiens (Human) protein is Hematopoietically-expressed homeobox protein HHEX (HHEX).